The primary structure comprises 135 residues: Class I hydrophobin dewA (135 aa).

Residues 1–18 (MRFIVSLLAFTAAATATA) form the signal peptide. 4 cysteine pairs are disulfide-bonded: C44–C114, C51–C108, C52–C84, and C115–C122. The N-linked (GlcNAc...) asparagine glycan is linked to N60.

The protein belongs to the fungal hydrophobin family. As to quaternary structure, forms homodimers at high concentrations, and these dimers are off-pathway to rodlet formation. Dissociation of the dimers into monomers, with resultant exposure of the hydrophobic face, is necessary for self-assembly to form functional amyloid fibrils called rodlets. Self-assembly into fibrillar rodlets occurs spontaneously at hydrophobic:hydrophilic interfaces and the rodlets further associate laterally to form amphipathic monolayers.

The protein localises to the secreted. Its subcellular location is the spore wall. Functionally, aerial growth, conidiation, and dispersal of filamentous fungi in the environment rely upon a capability of their secreting small amphipathic proteins called hydrophobins (HPBs) with low sequence identity. Class I can self-assemble into an outermost layer of rodlet bundles on aerial cell surfaces, conferring cellular hydrophobicity that supports fungal growth, development and dispersal; whereas Class II form highly ordered films at water-air interfaces through intermolecular interactions but contribute nothing to the rodlet structure. DewA is a class I hydrophobin that contributes to spore wall hydrophobicity. In Emericella nidulans (strain FGSC A4 / ATCC 38163 / CBS 112.46 / NRRL 194 / M139) (Aspergillus nidulans), this protein is Class I hydrophobin dewA.